The primary structure comprises 200 residues: dITP/XTP pyrophosphatase (200 aa).

Position 8 to 13 (Thr-8 to Lys-13) interacts with substrate. Asp-72 functions as the Proton acceptor in the catalytic mechanism. Residue Asp-72 coordinates Mg(2+). Residues Ser-73, Phe-155–Asp-158, Lys-178, and His-183–Arg-184 contribute to the substrate site.

It belongs to the HAM1 NTPase family. Homodimer. Mg(2+) is required as a cofactor.

It catalyses the reaction XTP + H2O = XMP + diphosphate + H(+). The enzyme catalyses dITP + H2O = dIMP + diphosphate + H(+). The catalysed reaction is ITP + H2O = IMP + diphosphate + H(+). Pyrophosphatase that catalyzes the hydrolysis of nucleoside triphosphates to their monophosphate derivatives, with a high preference for the non-canonical purine nucleotides XTP (xanthosine triphosphate), dITP (deoxyinosine triphosphate) and ITP. Seems to function as a house-cleaning enzyme that removes non-canonical purine nucleotides from the nucleotide pool, thus preventing their incorporation into DNA/RNA and avoiding chromosomal lesions. This is dITP/XTP pyrophosphatase from Streptomyces avermitilis (strain ATCC 31267 / DSM 46492 / JCM 5070 / NBRC 14893 / NCIMB 12804 / NRRL 8165 / MA-4680).